Here is a 475-residue protein sequence, read N- to C-terminus: tRNA-2-methylthio-N(6)-dimethylallyladenosine synthase (475 aa).

A disordered region spans residues 1-20; it reads MEQNLTTERSETSSSRAGTA. Positions 25-145 constitute an MTTase N-terminal domain; the sequence is KKVFVKTYGC…LPSVVTRARA (121 aa). 6 residues coordinate [4Fe-4S] cluster: cysteine 34, cysteine 70, cysteine 108, cysteine 186, cysteine 190, and cysteine 193. Residues 172-404 form the Radical SAM core domain; it reads RSRGVTAFLT…QALLAEQQRA (233 aa). In terms of domain architecture, TRAM spans 407–469; sequence ESLVGTEIDL…GHSLFCEPAG (63 aa).

This sequence belongs to the methylthiotransferase family. MiaB subfamily. As to quaternary structure, monomer. Requires [4Fe-4S] cluster as cofactor.

The protein localises to the cytoplasm. The catalysed reaction is N(6)-dimethylallyladenosine(37) in tRNA + (sulfur carrier)-SH + AH2 + 2 S-adenosyl-L-methionine = 2-methylsulfanyl-N(6)-dimethylallyladenosine(37) in tRNA + (sulfur carrier)-H + 5'-deoxyadenosine + L-methionine + A + S-adenosyl-L-homocysteine + 2 H(+). Functionally, catalyzes the methylthiolation of N6-(dimethylallyl)adenosine (i(6)A), leading to the formation of 2-methylthio-N6-(dimethylallyl)adenosine (ms(2)i(6)A) at position 37 in tRNAs that read codons beginning with uridine. The polypeptide is tRNA-2-methylthio-N(6)-dimethylallyladenosine synthase (Chelativorans sp. (strain BNC1)).